The primary structure comprises 213 residues: Uridine kinase (213 aa).

Residue 15–22 participates in ATP binding; it reads GASASGKS.

Belongs to the uridine kinase family.

Its subcellular location is the cytoplasm. The enzyme catalyses uridine + ATP = UMP + ADP + H(+). It carries out the reaction cytidine + ATP = CMP + ADP + H(+). The protein operates within pyrimidine metabolism; CTP biosynthesis via salvage pathway; CTP from cytidine: step 1/3. Its pathway is pyrimidine metabolism; UMP biosynthesis via salvage pathway; UMP from uridine: step 1/1. In Yersinia pseudotuberculosis serotype O:1b (strain IP 31758), this protein is Uridine kinase.